Reading from the N-terminus, the 34-residue chain is Small, acid-soluble spore protein M (34 aa).

The segment covering 1–10 has biased composition (basic residues); sequence MKTRPKKAGQ. The tract at residues 1–34 is disordered; that stretch reads MKTRPKKAGQQKKTESKAIDSLDKKLGGPNRPST. Basic and acidic residues predominate over residues 12-26; sequence KKTESKAIDSLDKKL.

It localises to the spore core. This chain is Small, acid-soluble spore protein M (sspM), found in Bacillus subtilis (strain 168).